A 1491-amino-acid polypeptide reads, in one-letter code: CLIP-associating protein (1491 aa).

HEAT repeat units follow at residues 44-82, 85-123, 163-201, and 402-440; these read CTDMGFLIDGLMPWLTGSHFKIAQKSLEAFSELIKRLGS, NAYTATVLPHVIDRLGDSRDTVREKAQLLLRDLMEHRVL, QLSVRVYIPPVCALLGDPTVNVREAAIQTLVEIYKHVGD, and DAFCWSILEHLINLIQNSAKVIASASTIALKYIIKYTHA. Disordered regions lie at residues 537–586 and 600–739; these read RERE…AVDT and LYSR…NNPV. Residues 542–551 show a composition bias toward gly residues; that stretch reads GGGGGTGTGT. Residues 569–580 show a composition bias toward polar residues; sequence GTLQKPTPSMRS. Phosphoserine is present on residues Ser582, Ser626, and Ser634. The segment covering 632–646 has biased composition (polar residues); it reads LNSNSGGTPATTPGS. A Phosphothreonine modification is found at Thr648. Composition is skewed to polar residues over residues 657-671 and 699-712; these read VSQSQPGSRSTSPST and PRSTASSRETSPTR. 5 positions are modified to phosphoserine: Ser806, Ser817, Ser820, Ser822, and Ser824. HEAT repeat units lie at residues 874–912 and 955–993; these read QQQLKCVLDMFRKMFMDTHTKVYSLFLDTVTELILVHAN and QLQLKELFRIISDSTQTPTTKTRIAILRFLTDLANTYCK. 2 disordered regions span residues 1065-1127 and 1167-1205; these read HMRR…SVEQ and GHLQYHDQGQQDSCASLSSNSKTQSSANTTQSNTPESAT. 3 stretches are compositionally biased toward low complexity: residues 1070–1097, 1111–1124, and 1181–1200; these read SQSCNSGANSPSSSPLSSSSPKPLQSPS, LSISSTSPRSRQSS, and ASLSSNSKTQSSANTTQSNT. Residues Ser1120, Ser1123, and Ser1124 each carry the phosphoserine modification. HEAT repeat units follow at residues 1289-1327 and 1408-1446; these read NKHFRSIMRMLLNILEAEHTDVVIAGLHVLSKIMRSNKM and DAHLDIVFPNLARSADDTQSMVRKAAVFCIVKLYFVLGE.

This sequence belongs to the CLASP family. As to quaternary structure, interacts with CLIP-190 and microtubules. Expressed in testis and ovary.

The protein resides in the cytoplasm. The protein localises to the cytoskeleton. It localises to the nucleus. It is found in the microtubule organizing center. Its subcellular location is the centrosome. The protein resides in the spindle. The protein localises to the cell projection. It localises to the growth cone. It is found in the cleavage furrow. Functionally, microtubule plus-end tracking protein that promotes the stabilization of dynamic microtubules. Required for several aspects of mitotic spindle formation including the formation of the overlapping central spindle microtubules and kinetochore attachment. Required for the incorporation of tubulin subunits at the plus ends of kinetochore microtubules during poleward microtubule flux. Acts antagonistically to Klp10A and Klp67A to maintain metaphase spindle length. Also required for guidance of CNS axons downstream of Abl. May function to identify a subset of microtubules that probe the peripheral growth cone domain, where guidance signals exert their influence on cytoskeletal organization. Also required during oogenesis for the organization of the polarized microtubule network inside the 16-cell cyst that ensures oocyte differentiation. In Drosophila melanogaster (Fruit fly), this protein is CLIP-associating protein (chb).